The primary structure comprises 227 residues: Uracil-DNA glycosylase (227 aa).

The Proton acceptor role is filled by Asp68.

This sequence belongs to the uracil-DNA glycosylase (UDG) superfamily. UNG family.

Its subcellular location is the cytoplasm. The catalysed reaction is Hydrolyzes single-stranded DNA or mismatched double-stranded DNA and polynucleotides, releasing free uracil.. Its function is as follows. Excises uracil residues from the DNA which can arise as a result of misincorporation of dUMP residues by DNA polymerase or due to deamination of cytosine. The chain is Uracil-DNA glycosylase from Mycobacterium leprae (strain Br4923).